The following is a 649-amino-acid chain: Putative calpain-like cysteine protease A (649 aa).

Residues 1 to 3 (MLT) constitute a propeptide that is removed on maturation. 2 disordered regions span residues 1-22 (MLTT…SSPS) and 124-193 (PLSN…SMPA). Residues 15-123 (TTTTSSPSSD…LHANGEAKWY (109 aa)) enclose the C2 domain. A compositionally biased stretch (low complexity) spans 140–149 (ITNSNNKDNN). The segment covering 159–172 (AQEKGDEDQHHSAD) has biased composition (basic and acidic residues). Domain III regions lie at residues 458–489 (EGTY…NATF) and 498–633 (EVEQ…ISLD).

Belongs to the peptidase C2 family. Monomer. In terms of processing, undergoes autolytic cleavage between Pro-192 and Ala-193.

It localises to the cytoplasm. The protein localises to the cytosol. Its function is as follows. Has a weak caseinolytic activity. The protein is Putative calpain-like cysteine protease A (cplA) of Dictyostelium discoideum (Social amoeba).